Reading from the N-terminus, the 959-residue chain is Glycine dehydrogenase (decarboxylating) (959 aa).

The residue at position 708 (Lys708) is an N6-(pyridoxal phosphate)lysine.

It belongs to the GcvP family. As to quaternary structure, the glycine cleavage system is composed of four proteins: P, T, L and H. Pyridoxal 5'-phosphate is required as a cofactor.

It catalyses the reaction N(6)-[(R)-lipoyl]-L-lysyl-[glycine-cleavage complex H protein] + glycine + H(+) = N(6)-[(R)-S(8)-aminomethyldihydrolipoyl]-L-lysyl-[glycine-cleavage complex H protein] + CO2. Functionally, the glycine cleavage system catalyzes the degradation of glycine. The P protein binds the alpha-amino group of glycine through its pyridoxal phosphate cofactor; CO(2) is released and the remaining methylamine moiety is then transferred to the lipoamide cofactor of the H protein. This chain is Glycine dehydrogenase (decarboxylating), found in Yersinia enterocolitica serotype O:8 / biotype 1B (strain NCTC 13174 / 8081).